The sequence spans 454 residues: MQKHSPGPPALALLSQSLLTTGNGDTLIINCPGFGQHRVDPAAFQAVFDRKAIGPVTNYSVATHVNISFTLSAIWNCYSRIHTFNCHHARPWHNQFVQWNPDECGGIKKSGMATENLWLSDVFIEESVDQTPAGLMASMSIVKATSNTISQCGWSASANWTPSISPSMDRARAWRRMSRSFQIHHRTSFRTRREWVLLGIQKRTIKVTVATNQYEQAIFHVAIRRRCRPSPYVVNFLVPSGILIAIDALSFYLPLESGNCAPFKMTVLLGYSVFLLMMNDLLPATSTSSHASLVAPLALMQTPLPAGVYFALCLSLMVGSLLETIFITHLLHVATTQPLPLPRWLHSLLLHCTGQGRCCPTAPQKGNKGPGLTPTHLPGVKEPEVSAGQMPGPGEAELTGGSEWTRAQREHEAQKQHSVELWVQFSHAMDALLFRLYLLFMASSIITVICLWNT.

The first 24 residues, 1-24, serve as a signal peptide directing secretion; it reads MQKHSPGPPALALLSQSLLTTGNG. Residues 25 to 232 are Extracellular-facing; the sequence is DTLIINCPGF…IRRRCRPSPY (208 aa). The N-linked (GlcNAc...) asparagine glycan is linked to Asn66. A helical membrane pass occupies residues 233–253; it reads VVNFLVPSGILIAIDALSFYL. Over 254–264 the chain is Cytoplasmic; it reads PLESGNCAPFK. A helical membrane pass occupies residues 265–285; sequence MTVLLGYSVFLLMMNDLLPAT. At 286–306 the chain is on the extracellular side; the sequence is STSSHASLVAPLALMQTPLPA. Residues 307–327 traverse the membrane as a helical segment; it reads GVYFALCLSLMVGSLLETIFI. Residues 328-431 lie on the Cytoplasmic side of the membrane; the sequence is THLLHVATTQ…WVQFSHAMDA (104 aa). The tract at residues 363–410 is disordered; sequence PQKGNKGPGLTPTHLPGVKEPEVSAGQMPGPGEAELTGGSEWTRAQRE. An HA-stretch; determines single-channel conductance in 5-HT3 receptors region spans residues 399-430; that stretch reads TGGSEWTRAQREHEAQKQHSVELWVQFSHAMD. A helical membrane pass occupies residues 432-452; the sequence is LLFRLYLLFMASSIITVICLW. Residues 453–454 lie on the Extracellular side of the membrane; sequence NT.

It belongs to the ligand-gated ion channel (TC 1.A.9) family. 5-hydroxytryptamine receptor (TC 1.A.9.2) subfamily. HTR3D sub-subfamily. As to quaternary structure, forms homopentameric as well as heteropentameric serotonin-activated cation-selective channel complexes with HTR3A. The homomeric complex is not functional. Heteropentameric complexes display properties which resemble that of neuronal serotonin-activated channels in vivo. Expressed in liver, as well as fetal and adult colon and kidney.

It localises to the postsynaptic cell membrane. The protein localises to the cell membrane. The catalysed reaction is Na(+)(in) = Na(+)(out). It carries out the reaction K(+)(in) = K(+)(out). The enzyme catalyses Ca(2+)(in) = Ca(2+)(out). Functionally, forms serotonin (5-hydroxytryptamine/5-HT3)-activated cation-selective channel complexes, which when activated cause fast, depolarizing responses in neurons. This chain is 5-hydroxytryptamine receptor 3D, found in Homo sapiens (Human).